The sequence spans 464 residues: ATP synthase subunit beta (464 aa).

153-160 (GGAGVGKT) is an ATP binding site.

The protein belongs to the ATPase alpha/beta chains family. As to quaternary structure, F-type ATPases have 2 components, CF(1) - the catalytic core - and CF(0) - the membrane proton channel. CF(1) has five subunits: alpha(3), beta(3), gamma(1), delta(1), epsilon(1). CF(0) has three main subunits: a(1), b(2) and c(9-12). The alpha and beta chains form an alternating ring which encloses part of the gamma chain. CF(1) is attached to CF(0) by a central stalk formed by the gamma and epsilon chains, while a peripheral stalk is formed by the delta and b chains.

The protein resides in the cell inner membrane. It carries out the reaction ATP + H2O + 4 H(+)(in) = ADP + phosphate + 5 H(+)(out). Functionally, produces ATP from ADP in the presence of a proton gradient across the membrane. The catalytic sites are hosted primarily by the beta subunits. This chain is ATP synthase subunit beta, found in Burkholderia ambifaria (strain ATCC BAA-244 / DSM 16087 / CCUG 44356 / LMG 19182 / AMMD) (Burkholderia cepacia (strain AMMD)).